The sequence spans 313 residues: D-alanine--D-alanine ligase (313 aa).

The 201-residue stretch at 108 to 308 folds into the ATP-grasp domain; the sequence is KLVWQQTGVP…YSELVVKVLS (201 aa). 138-193 contributes to the ATP binding site; it reads VAKLGLPLFVKPASEGSSVAVLKVKTADALPAALEEAATHDKIVIVEKSIEGGGEY. 3 residues coordinate Mg(2+): Asp262, Glu275, and Asn277.

Belongs to the D-alanine--D-alanine ligase family. The cofactor is Mg(2+). Mn(2+) serves as cofactor.

It localises to the cytoplasm. The catalysed reaction is 2 D-alanine + ATP = D-alanyl-D-alanine + ADP + phosphate + H(+). It functions in the pathway cell wall biogenesis; peptidoglycan biosynthesis. Its function is as follows. Cell wall formation. The polypeptide is D-alanine--D-alanine ligase (Burkholderia cenocepacia (strain ATCC BAA-245 / DSM 16553 / LMG 16656 / NCTC 13227 / J2315 / CF5610) (Burkholderia cepacia (strain J2315))).